The following is a 769-amino-acid chain: MVRTKNQSSSSSASSSTKSPVKISGGGGGGGGSSSSTNRSRSCSEALIDDGKSSSKLSSNRQRTTTTITTTTTTPGSSPDDDTTDADLTPTSGNVPRGGQSVHKQNLYVVSFPIIFLFNVLRSLIYQLFCIFRYLYGASTKVIYRSPHRRDCNIEIVVQNSKEQQAIICPLEGSGVNIEQAQILPQRQRALQTLEMAASRGGTGAGGYSPGPGDPLLAKQKHHHRRAFEYISKALKIDEENEGHKELAIELYRKGIKELEDGIAVDCWSGRGDVWDRAQRLHEKMQTNLSMARDRLHFLALREEDLQMQRLSLKEQPKKQLPHKFKQPMLVGQTTTSSGSSSSSRASAEPPKITLRSSGYGPKTGGATTSKAVPAASGRKLTIGNKRPGNLAVANKSQTLPRNLGSKTTSTSVGAALQRQPGKTAATPPAVRRQFSSGRNTPPQRSRTPINNNAASGSGSGASTPLISVKGVEQKLVQLILDEIVEGGAKVEWSDIAGQDVAKQALQEMVILPSVRPELFTGLRAPAKGLLLFGPPGNGKTLLARAVATECSATFLNISAASLTSKYVGDGEKLVRALFAVARHMQPSIIFIDEVDSLLSERSSNEHEASRRLKTEFLVEFDGLPGNPEGDRIVVLAATNRPQELDEAALRRFTKRVYVSLPGVQTRELLLSRLLQKQGSPLDTEALARLAKITDGYSGSDLTALAKDAALEPIRELNVEQVKCLDISAMRPITEKDFHNSLKRIRRSVAPQSLNSYEKWSQDYGDITI.

The tract at residues 1–100 (MVRTKNQSSS…TSGNVPRGGQ (100 aa)) is disordered. The Cytoplasmic portion of the chain corresponds to 1 to 113 (MVRTKNQSSS…KQNLYVVSFP (113 aa)). Residues 1 to 201 (MVRTKNQSSS…QTLEMAASRG (201 aa)) are required for localization to punctate cytoplasmic foci. Residues 8–19 (SSSSSASSSTKS) are compositionally biased toward low complexity. The segment covering 24–33 (SGGGGGGGGS) has biased composition (gly residues). Polar residues predominate over residues 54-63 (SSKLSSNRQR). Over residues 64–78 (TTTTITTTTTTPGSS) the composition is skewed to low complexity. Positions 114-134 (IIFLFNVLRSLIYQLFCIFRY) form an intramembrane region, helical. Over 135–769 (LYGASTKVIY…WSQDYGDITI (635 aa)) the chain is Cytoplasmic. Positions 199–769 (SRGGTGAGGY…WSQDYGDITI (571 aa)) are sufficient for interaction with microtubules and microtubule severing. Residues 224–299 (HRRAFEYISK…SMARDRLHFL (76 aa)) form the MIT domain. The tract at residues 314 to 462 (KEQPKKQLPH…NAASGSGSGA (149 aa)) is disordered. A compositionally biased stretch (low complexity) spans 334-344 (TTTSSGSSSSS). Polar residues-rich tracts occupy residues 395–413 (NKSQ…STSV) and 434–450 (QFSS…RTPI). The span at 451 to 462 (NNNAASGSGSGA) shows a compositional bias: low complexity. Residues 452 to 466 (NNAASGSGSGASTPL) form a required for interaction with microtubules region. 534-541 (GPPGNGKT) is an ATP binding site.

This sequence belongs to the AAA ATPase family. Spastin subfamily. Homohexamer. The homohexamer is stabilized by ATP-binding. The homohexamer may adopt a ring conformation through which microtubules pass prior to being severed. Interacts with microtubules. Interacts with atl; may be involved in microtubule dynamics.

The protein resides in the membrane. It localises to the cytoplasm. Its subcellular location is the cytoskeleton. It is found in the microtubule organizing center. The protein localises to the centrosome. The protein resides in the chromosome. It localises to the lipid droplet. The catalysed reaction is n ATP + n H2O + a microtubule = n ADP + n phosphate + (n+1) alpha/beta tubulin heterodimers.. Its function is as follows. ATP-dependent microtubule severing protein. Stimulates microtubule minus-end depolymerization and poleward microtubule flux in the mitotic spindle. Regulates microtubule stability in the neuromuscular junction synapse. Involved in lipid metabolism by regulating the size and distribution of lipid droplets. Involved in axon regeneration by regulating microtubule severing. The protein is Spastin of Drosophila virilis (Fruit fly).